Consider the following 313-residue polypeptide: Dimethyladenosine transferase (313 aa).

A disordered region spans residues 1-21; sequence MPKVKSGAIGRRRGRQEQRRE. The S-adenosyl-L-methionine site is built by H37, L39, G64, E85, D113, and N128.

It belongs to the class I-like SAM-binding methyltransferase superfamily. rRNA adenine N(6)-methyltransferase family. In terms of assembly, part of the small subunit (SSU) processome, composed of more than 70 proteins and the RNA chaperone small nucleolar RNA (snoRNA) U3.

It localises to the nucleus. It is found in the nucleoplasm. The protein resides in the nucleolus. It catalyses the reaction adenosine(1779)/adenosine(1780) in 18S rRNA + 4 S-adenosyl-L-methionine = N(6)-dimethyladenosine(1779)/N(6)-dimethyladenosine(1780) in 18S rRNA + 4 S-adenosyl-L-homocysteine + 4 H(+). Specifically dimethylates two adjacent adenosines in the loop of a conserved hairpin near the 3'-end of 18S rRNA in the 40S particle. Involved in the pre-rRNA processing steps leading to small-subunit rRNA production independently of its RNA-modifying catalytic activity. Part of the small subunit (SSU) processome, first precursor of the small eukaryotic ribosomal subunit. During the assembly of the SSU processome in the nucleolus, many ribosome biogenesis factors, an RNA chaperone and ribosomal proteins associate with the nascent pre-rRNA and work in concert to generate RNA folding, modifications, rearrangements and cleavage as well as targeted degradation of pre-ribosomal RNA by the RNA exosome. This Homo sapiens (Human) protein is Dimethyladenosine transferase.